The sequence spans 236 residues: Ribose-5-phosphate isomerase A (236 aa).

Residues 31–34, 88–91, and 101–104 contribute to the substrate site; these read TGST, DGAD, and KGGG. Glutamate 110 serves as the catalytic Proton acceptor. Substrate is bound at residue lysine 128.

The protein belongs to the ribose 5-phosphate isomerase family. In terms of assembly, homodimer.

It carries out the reaction aldehydo-D-ribose 5-phosphate = D-ribulose 5-phosphate. It participates in carbohydrate degradation; pentose phosphate pathway; D-ribose 5-phosphate from D-ribulose 5-phosphate (non-oxidative stage): step 1/1. Functionally, catalyzes the reversible conversion of ribose-5-phosphate to ribulose 5-phosphate. The polypeptide is Ribose-5-phosphate isomerase A (Thermosynechococcus vestitus (strain NIES-2133 / IAM M-273 / BP-1)).